The chain runs to 63 residues: Conotoxin Vi5.1a (63 aa).

The first 22 residues, 1–22 (MRCVPVFIILLLLIPSAPSADA), serve as a signal peptide directing secretion. Residues 23–50 (QPKTKDDVPLASYHDNAERTLQRLWNQR) constitute a propeptide that is removed on maturation. A Proline amide modification is found at Pro62.

It belongs to the conotoxin T superfamily. Post-translationally, contains 2 disulfide bonds that can be either 'C1-C3, C2-C4' or 'C1-C4, C2-C3', since these disulfide connectivities have been observed for conotoxins with cysteine framework V (for examples, see AC P0DQQ7 and AC P81755). Expressed by the venom duct.

The protein localises to the secreted. This Conus virgo (Virgin cone) protein is Conotoxin Vi5.1a.